The primary structure comprises 155 residues: Lipoprotein signal peptidase (155 aa).

A run of 4 helical transmembrane segments spans residues 7-27 (WFWI…YITV), 39-59 (IIPG…FSAF), 63-83 (VGWL…FAYF), and 96-116 (GFIL…GYVV). Catalysis depends on residues Asp117 and Asp133. A helical transmembrane segment spans residues 126–146 (FPVFNLADVFINIGIICLLIS).

This sequence belongs to the peptidase A8 family.

The protein resides in the cell inner membrane. It catalyses the reaction Release of signal peptides from bacterial membrane prolipoproteins. Hydrolyzes -Xaa-Yaa-Zaa-|-(S,diacylglyceryl)Cys-, in which Xaa is hydrophobic (preferably Leu), and Yaa (Ala or Ser) and Zaa (Gly or Ala) have small, neutral side chains.. The protein operates within protein modification; lipoprotein biosynthesis (signal peptide cleavage). In terms of biological role, this protein specifically catalyzes the removal of signal peptides from prolipoproteins. This chain is Lipoprotein signal peptidase, found in Microcystis aeruginosa (strain NIES-843 / IAM M-2473).